The sequence spans 288 residues: Stomatin (288 aa).

A disordered region spans residues 1–22 (MAEKRHTRDSEAQRLPDSFKDS). At 1-25 (MAEKRHTRDSEAQRLPDSFKDSPSK) the chain is on the cytoplasmic side. Ser10 bears the Phosphoserine; by PKA mark. Ser18 bears the Phosphoserine mark. The stretch at 26–54 (GLGPCGWILVAFSFLFTVITFPISIWMCI) is an intramembrane region. A lipid anchor (S-palmitoyl cysteine) is attached at Cys30. At 55 to 288 (KIIKEYERAI…IIGAKHSHLG (234 aa)) the chain is on the cytoplasmic side. Residue Cys87 is the site of S-palmitoyl cysteine; partial attachment. 2 positions are modified to phosphoserine: Ser161 and Ser244. Positions 265–273 (STIVFPLPI) are required for homooligomerization. The tract at residues 267–269 (IVF) is required for lipid raft association. Residues 273–287 (IDMLQGIIGAKHSHL) are interaction with LANCL1.

It belongs to the band 7/mec-2 family. As to quaternary structure, homodimer and higher order homooligomer. The homodimer is banana-shaped. Interacts with ASIC1, ASIC2 and ASIC3. Interacts with LANCL1. Interacts with SLC2A1. Interacts with SLC4A1; this interaction positively regulates SLC4A1 activity. Identified in large complexes with SLC40A1, SLC14A1, SLC29A1 and AQP1. Interacts with STOML1; may redistribute STOM from the plasma membrane to late endosomes. Detected in erythrocytes (at protein level). Widely expressed.

The protein resides in the cell membrane. The protein localises to the cytoplasm. It is found in the cytoskeleton. It localises to the membrane raft. Its subcellular location is the melanosome. The protein resides in the cytoplasmic vesicle. Regulates ion channel activity and transmembrane ion transport. Regulates ASIC2 and ASIC3 channel activity. The polypeptide is Stomatin (Homo sapiens (Human)).